The primary structure comprises 283 residues: Digeranylgeranylglyceryl phosphate synthase (283 aa).

Helical transmembrane passes span 21–41 (ITAS…EIDI), 45–65 (LLVF…NDIF), 97–117 (LILG…IAVI), 135–155 (IGNF…GVAG), 158–178 (VMPV…REIV), 204–224 (LYFA…PYIL), 226–246 (IFGI…IYAM), and 261–281 (VSKF…VGAI).

The protein belongs to the UbiA prenyltransferase family. DGGGP synthase subfamily. Requires Mg(2+) as cofactor.

The protein resides in the cell membrane. The catalysed reaction is sn-3-O-(geranylgeranyl)glycerol 1-phosphate + (2E,6E,10E)-geranylgeranyl diphosphate = 2,3-bis-O-(geranylgeranyl)-sn-glycerol 1-phosphate + diphosphate. It functions in the pathway membrane lipid metabolism; glycerophospholipid metabolism. Prenyltransferase that catalyzes the transfer of the geranylgeranyl moiety of geranylgeranyl diphosphate (GGPP) to the C2 hydroxyl of (S)-3-O-geranylgeranylglyceryl phosphate (GGGP). This reaction is the second ether-bond-formation step in the biosynthesis of archaeal membrane lipids. This Methanocaldococcus jannaschii (strain ATCC 43067 / DSM 2661 / JAL-1 / JCM 10045 / NBRC 100440) (Methanococcus jannaschii) protein is Digeranylgeranylglyceryl phosphate synthase.